The chain runs to 155 residues: Ribonuclease H (155 aa).

The region spanning 4-145 is the RNase H type-1 domain; that stretch reads TEPTVYAYTD…ADRLANRGID (142 aa). Asp13, Glu51, Asp73, and Asp137 together coordinate Mg(2+).

Belongs to the RNase H family. Monomer. The cofactor is Mg(2+).

The protein localises to the cytoplasm. The catalysed reaction is Endonucleolytic cleavage to 5'-phosphomonoester.. Functionally, endonuclease that specifically degrades the RNA of RNA-DNA hybrids. This is Ribonuclease H from Methylococcus capsulatus (strain ATCC 33009 / NCIMB 11132 / Bath).